A 547-amino-acid polypeptide reads, in one-letter code: Glucose-6-phosphate isomerase 2 (547 aa).

The active-site Proton donor is Glu351. Residues His382 and Lys508 contribute to the active site.

This sequence belongs to the GPI family.

Its subcellular location is the cytoplasm. The catalysed reaction is alpha-D-glucose 6-phosphate = beta-D-fructose 6-phosphate. It functions in the pathway carbohydrate biosynthesis; gluconeogenesis. The protein operates within carbohydrate degradation; glycolysis; D-glyceraldehyde 3-phosphate and glycerone phosphate from D-glucose: step 2/4. Catalyzes the reversible isomerization of glucose-6-phosphate to fructose-6-phosphate. The chain is Glucose-6-phosphate isomerase 2 from Neisseria meningitidis serogroup B (strain ATCC BAA-335 / MC58).